The following is a 199-amino-acid chain: Charged multivesicular body protein 1b (199 aa).

Residues 26 to 48 adopt a coiled-coil conformation; the sequence is DKEEKAEKAKIKKAIQKGNMEVA. Positions 132–156 are interaction with IST1; sequence MEDTMSSTTTLTTPQGQVDMLLQEM. Residues 167 to 199 are disordered; the sequence is ELPQGQTGSVGTSVASAEQDELSQRLARLRDQV. A compositionally biased stretch (polar residues) spans 170–182; the sequence is QGQTGSVGTSVAS. The interval 174-199 is interaction with SPAST; the sequence is GSVGTSVASAEQDELSQRLARLRDQV. A coiled-coil region spans residues 178 to 199; it reads TSVASAEQDELSQRLARLRDQV. Residues 180–196 form an interaction with VPS4A, MITD1 and STAMBP region; it reads VASAEQDELSQRLARLR. The interval 180-199 is interaction with VTA1; the sequence is VASAEQDELSQRLARLRDQV. The tract at residues 183-199 is interaction with VPS4B; it reads AEQDELSQRLARLRDQV. An MIT-interacting motif motif is present at residues 186–196; it reads DELSQRLARLR.

The protein belongs to the SNF7 family. In terms of assembly, probable peripherally associated component of the endosomal sorting required for transport complex III (ESCRT-III). ESCRT-III components are thought to multimerize to form a flat lattice on the perimeter membrane of the endosome. Several assembly forms of ESCRT-III may exist that interact and act sequentially. Interacts with CHMP1A. Interacts with VTA1; the interaction probably involves the open conformation of CHMP1B. Interacts with CHMP2A. Interacts with VPS4A; the interaction is direct. Interacts with VPS4B; the interaction is direct. Interacts with SPAST (via MIT domain); the interaction is direct. Interacts with IST1. Interacts with MITD1. Interacts with STAMBP.

The protein resides in the cytoplasm. The protein localises to the cytosol. It is found in the endosome. It localises to the late endosome membrane. In terms of biological role, probable peripherally associated component of the endosomal sorting required for transport complex III (ESCRT-III) which is involved in multivesicular bodies (MVBs) formation and sorting of endosomal cargo proteins into MVBs. MVBs contain intraluminal vesicles (ILVs) that are generated by invagination and scission from the limiting membrane of the endosome and mostly are delivered to lysosomes enabling degradation of membrane proteins, such as stimulated growth factor receptors, lysosomal enzymes and lipids. The MVB pathway appears to require the sequential function of ESCRT-O, -I,-II and -III complexes. ESCRT-III proteins mostly dissociate from the invaginating membrane before the ILV is released. The ESCRT machinery also functions in topologically equivalent membrane fission events, such as the terminal stages of cytokinesis and the budding of enveloped viruses (lentiviruses). ESCRT-III proteins are believed to mediate the necessary vesicle extrusion and/or membrane fission activities, possibly in conjunction with the AAA ATPase VPS4. Involved in cytokinesis. Involved in recruiting VPS4A and/or VPS4B and SPAST to the midbody of dividing cells. The sequence is that of Charged multivesicular body protein 1b (CHMP1B) from Bos taurus (Bovine).